A 356-amino-acid chain; its full sequence is Holliday junction branch migration complex subunit RuvB (356 aa).

A compositionally biased stretch (polar residues) spans 1–14; the sequence is MAIVSSITNHSSLP. The interval 1-20 is disordered; sequence MAIVSSITNHSSLPNDKGEE. Positions 13 to 201 are large ATPase domain (RuvB-L); sequence LPNDKGEERL…FGITQRLDFY (189 aa). ATP contacts are provided by leucine 40, arginine 41, glycine 82, lysine 85, threonine 86, threonine 87, arginine 191, tyrosine 201, and arginine 238. Threonine 86 is a binding site for Mg(2+). The small ATPAse domain (RuvB-S) stretch occupies residues 202–273; sequence NYLDLENIIK…VVNDALDLHR (72 aa). The head domain (RuvB-H) stretch occupies residues 276 to 356; the sequence is QRGLDATDRS…LLTSPNNIDK (81 aa). Arginine 331 and arginine 336 together coordinate DNA.

Belongs to the RuvB family. As to quaternary structure, homohexamer. Forms an RuvA(8)-RuvB(12)-Holliday junction (HJ) complex. HJ DNA is sandwiched between 2 RuvA tetramers; dsDNA enters through RuvA and exits via RuvB. An RuvB hexamer assembles on each DNA strand where it exits the tetramer. Each RuvB hexamer is contacted by two RuvA subunits (via domain III) on 2 adjacent RuvB subunits; this complex drives branch migration. In the full resolvosome a probable DNA-RuvA(4)-RuvB(12)-RuvC(2) complex forms which resolves the HJ.

It localises to the cytoplasm. It catalyses the reaction ATP + H2O = ADP + phosphate + H(+). In terms of biological role, the RuvA-RuvB-RuvC complex processes Holliday junction (HJ) DNA during genetic recombination and DNA repair, while the RuvA-RuvB complex plays an important role in the rescue of blocked DNA replication forks via replication fork reversal (RFR). RuvA specifically binds to HJ cruciform DNA, conferring on it an open structure. The RuvB hexamer acts as an ATP-dependent pump, pulling dsDNA into and through the RuvAB complex. RuvB forms 2 homohexamers on either side of HJ DNA bound by 1 or 2 RuvA tetramers; 4 subunits per hexamer contact DNA at a time. Coordinated motions by a converter formed by DNA-disengaged RuvB subunits stimulates ATP hydrolysis and nucleotide exchange. Immobilization of the converter enables RuvB to convert the ATP-contained energy into a lever motion, pulling 2 nucleotides of DNA out of the RuvA tetramer per ATP hydrolyzed, thus driving DNA branch migration. The RuvB motors rotate together with the DNA substrate, which together with the progressing nucleotide cycle form the mechanistic basis for DNA recombination by continuous HJ branch migration. Branch migration allows RuvC to scan DNA until it finds its consensus sequence, where it cleaves and resolves cruciform DNA. The sequence is that of Holliday junction branch migration complex subunit RuvB from Prochlorococcus marinus (strain NATL2A).